Consider the following 227-residue polypeptide: PKHD-type hydroxylase Bcen_3557 (227 aa).

Residues 78 to 178 (KVFPPLFNRY…RVASFFWIQS (101 aa)) form the Fe2OG dioxygenase domain. His-96, Asp-98, and His-159 together coordinate Fe cation. Residue Arg-169 coordinates 2-oxoglutarate.

Requires Fe(2+) as cofactor. L-ascorbate is required as a cofactor.

The sequence is that of PKHD-type hydroxylase Bcen_3557 from Burkholderia orbicola (strain AU 1054).